A 98-amino-acid polypeptide reads, in one-letter code: Putative pterin-4-alpha-carbinolamine dehydratase (98 aa).

The protein belongs to the pterin-4-alpha-carbinolamine dehydratase family.

It carries out the reaction (4aS,6R)-4a-hydroxy-L-erythro-5,6,7,8-tetrahydrobiopterin = (6R)-L-erythro-6,7-dihydrobiopterin + H2O. This Chelativorans sp. (strain BNC1) protein is Putative pterin-4-alpha-carbinolamine dehydratase.